We begin with the raw amino-acid sequence, 101 residues long: Apolipoprotein C-II (101 aa).

A signal peptide spans 1–22 (MGIRYLLVLVLVLLVLGCEVQG). Residues 66 to 74 (TMDEKIREI) are lipid binding. The segment at 78–101 (STAAVSTYAGIFTDQLLSMLKGDQ) is lipoprotein lipase cofactor.

Belongs to the apolipoprotein C2 family. Proapolipoprotein C-II is synthesized as a sialic acid containing glycoprotein which is subsequently desialylated prior to its proteolytic processing. In terms of processing, proapolipoprotein C-II, the major form found in plasma undergoes proteolytic cleavage of its N-terminal hexapeptide to generate apolipoprotein C-II, which occurs as the minor form in plasma.

The protein resides in the secreted. Functionally, component of chylomicrons, very low-density lipoproteins (VLDL), low-density lipoproteins (LDL), and high-density lipoproteins (HDL) in plasma. Plays an important role in lipoprotein metabolism as an activator of lipoprotein lipase. Both proapolipoprotein C-II and apolipoprotein C-II can activate lipoprotein lipase. In Phoca vitulina (Harbor seal), this protein is Apolipoprotein C-II (APOC2).